Reading from the N-terminus, the 283-residue chain is tRNA (guanine-N(1)-)-methyltransferase (283 aa).

S-adenosyl-L-methionine-binding positions include G113 and 133–138; that span reads IGDYVL.

Belongs to the RNA methyltransferase TrmD family. As to quaternary structure, homodimer.

Its subcellular location is the cytoplasm. It carries out the reaction guanosine(37) in tRNA + S-adenosyl-L-methionine = N(1)-methylguanosine(37) in tRNA + S-adenosyl-L-homocysteine + H(+). Specifically methylates guanosine-37 in various tRNAs. The protein is tRNA (guanine-N(1)-)-methyltransferase of Parafrankia sp. (strain EAN1pec).